Consider the following 527-residue polypeptide: MSDTLTADVIGQRVEVNGEHATVRFAGVVPPVAGPWLGVEWDNPERGKHDGSHEGTVYFQCRHPTGGSFIRPNKVNFGTDFLTAIKNRYVLEDGPEEDRKEQIVTIGNKPVETIGFDSIMKQQSQLSKLQEVSLRNCAVSCAGEKGGVAEGCPNIRKVDLSKNLLSSWDEVIHIADQLRHLEVLNVSENKLKFPSGSVLTGTLSALKVLVLNQTGITWAEVLRCAMGCPGLEELYLESNNIFISERPTDVLQTVKLLDLSSNQLIDENQLYLIAHLPRLEQLILSDIGISSLHFPDAGIGCKTSLFPSLKYLVVNDNQISQWSFFNELDKLPSLRALSCLRNPLTKEDKEAETARLLIIASIGQLKTLNKCEILPEERRRAELDYRKAFGNEWKQAGGHKDPDKNRLSEEFLTAHPRYQFLCLKYGAPEEWELKTQQPLMLKNQLLTLKIKYPHQLDQKVLEKQLPGSMTIQKVKGLLSRLLKVPVSDLLLSYESPQKPGVEIELENDLKSLQFYSVENGDCLLVRW.

Serine 2 is subject to N-acetylserine. One can recognise a CAP-Gly domain in the interval 27–71; it reads GVVPPVAGPWLGVEWDNPERGKHDGSHEGTVYFQCRHPTGGSFIR. LRR repeat units lie at residues 154–175, 180–200, 205–226, 230–252, 253–274, 278–299, and 308–329; these read NIRKVDLSKNLLSSWDEVIHIA, HLEVLNVSENKLKFPSGSVLT, ALKVLVLNQTGITWAEVLRCAM, GLEELYLESNNIFISERPTDVLQ, TVKLLDLSSNQLIDENQLYLIA, RLEQLILSDIGISSLHFPDAGI, and SLKYLVVNDNQISQWSFFNELD. Positions 342–384 constitute an LRRCT domain; the sequence is NPLTKEDKEAETARLLIIASIGQLKTLNKCEILPEERRRAELD. N6-acetyllysine is present on lysine 463. At serine 495 the chain carries Phosphoserine.

It belongs to the TBCE family. In terms of assembly, supercomplex made of cofactors A to E. Cofactors A and D function by capturing and stabilizing tubulin in a quasi-native conformation. Cofactor E binds to the cofactor D-tubulin complex; interaction with cofactor C then causes the release of tubulin polypeptides that are committed to the native state. Cofactors B and E can form a heterodimer which binds to alpha-tubulin and enhances their ability to dissociate tubulin heterodimers. Interacts with TBCD.

It localises to the cytoplasm. Its subcellular location is the cytoskeleton. Its function is as follows. Tubulin-folding protein; involved in the second step of the tubulin folding pathway and in the regulation of tubulin heterodimer dissociation. Required for correct organization of microtubule cytoskeleton and mitotic splindle, and maintenance of the neuronal microtubule network. In Pongo abelii (Sumatran orangutan), this protein is Tubulin-specific chaperone E (TBCE).